The sequence spans 282 residues: Undecaprenyl-diphosphatase (282 aa).

Helical transmembrane passes span 90-110, 121-141, 194-214, 228-248, and 256-276; these read YRLG…GLFF, LWVV…AEYV, FGFL…LPDA, QLLV…AWLL, and MYWF…LLAT.

Belongs to the UppP family.

Its subcellular location is the cell membrane. The enzyme catalyses di-trans,octa-cis-undecaprenyl diphosphate + H2O = di-trans,octa-cis-undecaprenyl phosphate + phosphate + H(+). Functionally, catalyzes the dephosphorylation of undecaprenyl diphosphate (UPP). Confers resistance to bacitracin. The protein is Undecaprenyl-diphosphatase of Mycobacterium tuberculosis (strain ATCC 25618 / H37Rv).